The primary structure comprises 562 residues: F-box only protein 33 (562 aa).

The F-box domain maps to 68 to 114 (AAGAASLPSELIVHIFSFLPAPDRLRASASCSHWRECLFYPALWPQL). Residues 155-173 (GGGPGDGGSGGGTDTGTGG) show a composition bias toward gly residues. The segment at 155 to 176 (GGGPGDGGSGGGTDTGTGGEDG) is disordered.

In terms of assembly, part of the SCF (SKP1-CUL1-F-box) E3 ubiquitin-protein ligase complex SCF(FBXO33) formed of CUL1, SKP1, RBX1 and FBXO33. Interacts via its N-terminus with YBX1 CSD domain. Directly interacts with SKP1 and CUL1.

It participates in protein modification; protein ubiquitination. Functionally, substrate recognition component of a SCF (SKP1-CUL1-F-box protein) E3 ubiquitin-protein ligase complex which mediates the ubiquitination and subsequent proteasomal degradation of target proteins. Probably recognizes and binds to phosphorylated target proteins. Recognizes YBX1. This is F-box only protein 33 (Fbxo33) from Mus musculus (Mouse).